A 413-amino-acid polypeptide reads, in one-letter code: MKVYLVGGAVRDQLLGREVRERDWVVVGARPEDLKQRGYRPVGQDFPVFLHPETHEEYALARTERKTGRGYHGFAFHASPEVTLEQDLARRDLTINAMARADDGTLIDPYDGRRDLEQRLLRHVSPAFAEDPVRILRLARFAARFQPLGFRVAPETLALCRKMVADGEVDALVPERVWQELSRALLEDTPVPFFRVLRECGALARVLPELDRLFGIPEPEAYHPEGDTGEHTLLALAQSARLGGDLPVRWAVLLHDLGKATTPSQVWPRHPAHEHRGVPLVEALCERLRAPRECRDLARLVCRYHLQAHRAFELRASTLLKLLEGLDLFRRQARLEPFLLACEADARGRLGLEDQPYPQARFLREAYRVAAAVTARPFVQAGFKGRQIAEAVTRERIRALAALQRDYPRPEAH.

ATP-binding residues include G8 and R11. CTP is bound by residues G8 and R11. 2 residues coordinate Mg(2+): E21 and D23. The ATP site is built by R91, R137, and R140. Residues R91, R137, and R140 each contribute to the CTP site. Residues 228–329 (TGEHTLLALA…LKLLEGLDLF (102 aa)) form the HD domain.

This sequence belongs to the tRNA nucleotidyltransferase/poly(A) polymerase family. Bacterial CCA-adding enzyme type 1 subfamily. As to quaternary structure, monomer. Can also form homodimers and oligomers. Mg(2+) serves as cofactor. It depends on Ni(2+) as a cofactor.

It catalyses the reaction a tRNA precursor + 2 CTP + ATP = a tRNA with a 3' CCA end + 3 diphosphate. It carries out the reaction a tRNA with a 3' CCA end + 2 CTP + ATP = a tRNA with a 3' CCACCA end + 3 diphosphate. In terms of biological role, catalyzes the addition and repair of the essential 3'-terminal CCA sequence in tRNAs without using a nucleic acid template. Adds these three nucleotides in the order of C, C, and A to the tRNA nucleotide-73, using CTP and ATP as substrates and producing inorganic pyrophosphate. tRNA 3'-terminal CCA addition is required both for tRNA processing and repair. Also involved in tRNA surveillance by mediating tandem CCA addition to generate a CCACCA at the 3' terminus of unstable tRNAs. While stable tRNAs receive only 3'-terminal CCA, unstable tRNAs are marked with CCACCA and rapidly degraded. The polypeptide is Multifunctional CCA protein (Alkalilimnicola ehrlichii (strain ATCC BAA-1101 / DSM 17681 / MLHE-1)).